We begin with the raw amino-acid sequence, 277 residues long: Release factor glutamine methyltransferase (277 aa).

S-adenosyl-L-methionine-binding positions include 117–121, D140, W168, and N183; that span reads GTGTG. 183–186 lines the substrate pocket; sequence NPPY.

It belongs to the protein N5-glutamine methyltransferase family. PrmC subfamily.

The enzyme catalyses L-glutaminyl-[peptide chain release factor] + S-adenosyl-L-methionine = N(5)-methyl-L-glutaminyl-[peptide chain release factor] + S-adenosyl-L-homocysteine + H(+). In terms of biological role, methylates the class 1 translation termination release factors RF1/PrfA and RF2/PrfB on the glutamine residue of the universally conserved GGQ motif. The chain is Release factor glutamine methyltransferase from Shigella dysenteriae serotype 1 (strain Sd197).